The sequence spans 274 residues: MALVKSKPTSPGRRFVVKTKDARLHQGGPYEPLVVQKSKTGGRNSNGRITTRHRGGGHKQRYRQIDFKRNKTGVPGKVERLEYDPNRSANIALVLYQDGERRYIIAPRGVEPGSPIQSGRDAAIKPGNALPLRNIPVGTQVHCVELKPGKGAQLARSAGAGVQVVARESGMATLRLRSGEMRRVPADCMATVGEVGNAEHSLRNLGKAGAKRHLGVRPTVRGVAMNPVDHPHGGGEGRTAGGRHPVSPWGMPTKGHKTRKNKRTDKYIVRRRKR.

2 disordered regions span residues 36–61 (QKSK…HKQR) and 223–274 (VAMN…RRKR). Polar residues predominate over residues 37-46 (KSKTGGRNSN). Basic residues-rich tracts occupy residues 50-61 (TTRHRGGGHKQR) and 254-274 (KGHK…RRKR).

It belongs to the universal ribosomal protein uL2 family. Part of the 50S ribosomal subunit. Forms a bridge to the 30S subunit in the 70S ribosome.

One of the primary rRNA binding proteins. Required for association of the 30S and 50S subunits to form the 70S ribosome, for tRNA binding and peptide bond formation. It has been suggested to have peptidyltransferase activity; this is somewhat controversial. Makes several contacts with the 16S rRNA in the 70S ribosome. This Halorhodospira halophila (strain DSM 244 / SL1) (Ectothiorhodospira halophila (strain DSM 244 / SL1)) protein is Large ribosomal subunit protein uL2.